The chain runs to 105 residues: Toxin ParE2 (105 aa).

The protein belongs to the RelE toxin family.

Functionally, toxic component of a type II toxin-antitoxin (TA) system. Its toxic effect is neutralized by coexpression with cognate antitoxin ParD2. This Mycobacterium tuberculosis (strain CDC 1551 / Oshkosh) protein is Toxin ParE2 (parE2).